The chain runs to 294 residues: UPF0761 membrane protein MADE_1017605/MADE_1018330 (294 aa).

Helical transmembrane passes span 45-65 (LLSL…FPAF), 99-119 (ASQM…MLIS), 141-161 (FAIY…SVVV), 182-202 (FLLS…LYMV), 213-233 (AFVG…GFAL), and 247-267 (ALAV…IVLF).

This sequence belongs to the UPF0761 family.

It localises to the cell inner membrane. This is UPF0761 membrane protein MADE_1017605/MADE_1018330 from Alteromonas mediterranea (strain DSM 17117 / CIP 110805 / LMG 28347 / Deep ecotype).